The following is a 241-amino-acid chain: Phosphoribosylaminoimidazole-succinocarboxamide synthase (241 aa).

This sequence belongs to the SAICAR synthetase family.

It carries out the reaction 5-amino-1-(5-phospho-D-ribosyl)imidazole-4-carboxylate + L-aspartate + ATP = (2S)-2-[5-amino-1-(5-phospho-beta-D-ribosyl)imidazole-4-carboxamido]succinate + ADP + phosphate + 2 H(+). It functions in the pathway purine metabolism; IMP biosynthesis via de novo pathway; 5-amino-1-(5-phospho-D-ribosyl)imidazole-4-carboxamide from 5-amino-1-(5-phospho-D-ribosyl)imidazole-4-carboxylate: step 1/2. This chain is Phosphoribosylaminoimidazole-succinocarboxamide synthase, found in Caldivirga maquilingensis (strain ATCC 700844 / DSM 13496 / JCM 10307 / IC-167).